A 604-amino-acid polypeptide reads, in one-letter code: Sulfite reductase [NADPH] flavoprotein alpha-component (604 aa).

The 139-residue stretch at 65–203 (VTILYGSQTG…AAGQWHADVL (139 aa)) folds into the Flavodoxin-like domain. FMN contacts are provided by residues 71–76 (SQTGNG), 118–121 (STHG), and 154–163 (LGDSSYEFFC). The FAD-binding FR-type domain maps to 236–453 (QNPYSAEVLV…VEPNKHFRLP (218 aa)). FAD is bound by residues T324, L358, 392-395 (RLYS), 410-412 (TVA), and 425-428 (GGAS). Residues 524 to 525 (SR), 530 to 534 (KIYVQ), and D566 contribute to the NADP(+) site. Y604 contacts FAD.

The protein belongs to the NADPH-dependent sulphite reductase flavoprotein subunit CysJ family. It in the N-terminal section; belongs to the flavodoxin family. In the C-terminal section; belongs to the flavoprotein pyridine nucleotide cytochrome reductase family. As to quaternary structure, alpha(8)-beta(8). The alpha component is a flavoprotein, the beta component is a hemoprotein. FAD serves as cofactor. The cofactor is FMN.

The catalysed reaction is hydrogen sulfide + 3 NADP(+) + 3 H2O = sulfite + 3 NADPH + 4 H(+). The protein operates within sulfur metabolism; hydrogen sulfide biosynthesis; hydrogen sulfide from sulfite (NADPH route): step 1/1. Its function is as follows. Component of the sulfite reductase complex that catalyzes the 6-electron reduction of sulfite to sulfide. This is one of several activities required for the biosynthesis of L-cysteine from sulfate. The flavoprotein component catalyzes the electron flow from NADPH -&gt; FAD -&gt; FMN to the hemoprotein component. The protein is Sulfite reductase [NADPH] flavoprotein alpha-component of Shewanella sp. (strain MR-7).